Reading from the N-terminus, the 677-residue chain is Methionine--tRNA ligase (677 aa).

Positions 15–25 match the 'HIGH' region motif; sequence PYANGSIHLGH. Zn(2+) contacts are provided by C146, C149, C159, and C162. The 'KMSKS' region signature appears at 333–337; sequence KMSKS. ATP is bound at residue K336. The tRNA-binding domain maps to 575–677; sequence DFAKVDLRVA…AGAKPGHQVK (103 aa).

This sequence belongs to the class-I aminoacyl-tRNA synthetase family. MetG type 1 subfamily. As to quaternary structure, homodimer. The cofactor is Zn(2+).

It is found in the cytoplasm. The catalysed reaction is tRNA(Met) + L-methionine + ATP = L-methionyl-tRNA(Met) + AMP + diphosphate. Its function is as follows. Is required not only for elongation of protein synthesis but also for the initiation of all mRNA translation through initiator tRNA(fMet) aminoacylation. The chain is Methionine--tRNA ligase from Shigella boydii serotype 18 (strain CDC 3083-94 / BS512).